The following is a 161-amino-acid chain: MVEQKDKYRPCVGIMLFNKQGHVFIGKRFDSDSYWQMPQGGIDDGEKLEQAALRELLEEVGTDKAKIIAKNKDWIYYNLPEEVIPTCWNGRYSGQKQRWFLMKFYGEGKDININYTDHPEFKEWRWQSVDNLVAGAIPFKKEVYKTVIEEFSSQIKVSIIK.

Positions 7-149 (KYRPCVGIML…KKEVYKTVIE (143 aa)) constitute a Nudix hydrolase domain. The Nudix box signature appears at 40–61 (GGIDDGEKLEQAALRELLEEVG).

Belongs to the Nudix hydrolase family. RppH subfamily. It depends on a divalent metal cation as a cofactor.

Accelerates the degradation of transcripts by removing pyrophosphate from the 5'-end of triphosphorylated RNA, leading to a more labile monophosphorylated state that can stimulate subsequent ribonuclease cleavage. The chain is RNA pyrophosphohydrolase from Wolbachia sp. subsp. Brugia malayi (strain TRS).